The following is a 667-amino-acid chain: MEILESIDFIEVLILDNLGAIIIVAVIVGTYLYMNKPPPPPPVFNKPNNKINKEAQKPKKTITKNEDGKKVMKIFFGTQTRTAEDFSRIIEKECKKIGIPCEVVDLESYEHEQELHSESFVMFLVATHGEGDPTDNAKEFYLWLTNDERPTDLLNGVPFTVFGLGNKTYEHYNAVARVIDRRMEELGGKRVFERGEGDDDATLEEDFNRWKKDMWPVVCKFLGYELKSTEDDKFVPRFRMVTLNQDSKDINDPFIKIVSTPLKPKLSTDNKVIYDMKNPYYAEVLENRELHSNESDRSCRHIEFKLGDEVSYTTGDHLGVFPINDSKLVEQLIKRLGVNGDDMIALVPIDQEGSVIKASFGPMTIRRAFSEHLDITNPVRKSVLRALAESTTNEEEKKRLLYLATEEANEEYNKYIKNDFRGVVDLLESFPGLQPLIAHFLEFTPRLPARMYSISSSPHNKNGVVSITSVVVNFTTGNQRAHNGVASTWLSHLKVGDKVPLFVRESHFKLPSAATEQKPVIMVGPGTGLAPFRGFLQELQHRNHSQQQQSLLFFGCRSDTVDYIYREELEQYHQSSVLGDLVVAFSRKTSQKVYVQNKLLEHKEKVWELLNKGAYFYVCGDGRNMSKAVQQALLSIIKEFGSKDDNSAQQFIDDMSSHGRYLQDVWF.

At methionine 1–aspartate 8 the chain is on the lumenal side. The chain crosses the membrane as a helical span at residues phenylalanine 9 to glycine 29. Over threonine 30–phenylalanine 667 the chain is Cytoplasmic. Residues methionine 72 to tryptophan 215 form the Flavodoxin-like domain. Residues leucine 164 to asparagine 173 and aspartate 199 each bind FMN. The FAD-binding FR-type domain occupies lysine 277–proline 511. Arginine 297 is an NADP(+) binding site. FAD-binding positions include threonine 468 to valine 470 and glycine 484 to serine 487. NADP(+) contacts are provided by residues threonine 527, serine 586–arginine 587, and lysine 592–glutamine 596. Tryptophan 666 contacts FAD.

The protein belongs to the NADPH--cytochrome P450 reductase family. In the N-terminal section; belongs to the flavodoxin family. This sequence in the C-terminal section; belongs to the flavoprotein pyridine nucleotide cytochrome reductase family. It depends on FAD as a cofactor. The cofactor is FMN.

It localises to the endoplasmic reticulum membrane. It catalyses the reaction 2 oxidized [cytochrome P450] + NADPH = 2 reduced [cytochrome P450] + NADP(+) + H(+). Its function is as follows. This enzyme is required for electron transfer from NADP to cytochrome P450 in microsomes. It can also provide electron transfer to heme oxygenase and cytochrome B5. This chain is NADPH--cytochrome P450 reductase (redB), found in Dictyostelium discoideum (Social amoeba).